Here is a 689-residue protein sequence, read N- to C-terminus: Transcription factor BHLH42 (689 aa).

Disordered stretches follow at residues isoleucine 192–valine 287 and aspartate 458–valine 489. Residues glutamate 206–valine 217 show a composition bias toward polar residues. The segment covering glutamate 246 to aspartate 271 has biased composition (acidic residues). Positions glutamate 483–arginine 496 are basic motif. The bHLH domain occupies glutamate 483–leucine 532. The helix-loop-helix motif stretch occupies residues glutamate 497–leucine 532. The disordered stretch occupies residues glutamate 547–arginine 570.

The protein belongs to the bHLH protein family. In terms of assembly, interacts with MYB123. Expressed in the inner pericarp of maturing fruits.

The protein localises to the nucleus. Functionally, transcription activator involved in the spatiotemporal regulation of anthocyanin biosynthesis specifically in the inner pericarp of red-fleshed kiwifruits. Functions in association with MYB123 to activate the promoters of LDOX (ANS) and F3GT1 that encode the dedicated enzymes for anthocyanin biosynthesis. This chain is Transcription factor BHLH42, found in Actinidia chinensis var. chinensis (Chinese soft-hair kiwi).